We begin with the raw amino-acid sequence, 412 residues long: Alanyl-tRNA editing protein Aarsd1 (412 aa).

His108, His112, Cys208, and His212 together coordinate Zn(2+).

The protein belongs to the class-II aminoacyl-tRNA synthetase family. Alax-L subfamily. The cofactor is Zn(2+).

Its subcellular location is the cytoplasm. Its function is as follows. Functions in trans to edit the amino acid moiety from incorrectly charged tRNA(Ala). The polypeptide is Alanyl-tRNA editing protein Aarsd1 (aarsd1) (Danio rerio (Zebrafish)).